Reading from the N-terminus, the 464-residue chain is Argininosuccinate lyase (464 aa).

Residue alanine 2 is modified to N-acetylalanine. Residue lysine 7 is modified to N6-acetyllysine. Serine 27 is a binding site for 2-(N(omega)-L-arginino)succinate. Position 69 is an N6-acetyllysine (lysine 69). The 2-(N(omega)-L-arginino)succinate site is built by asparagine 114 and threonine 159. The active-site Proton acceptor is histidine 160. Serine 281 functions as the Proton donor in the catalytic mechanism. Lysine 288 is subject to N6-acetyllysine. 2-(N(omega)-L-arginino)succinate contacts are provided by asparagine 289, tyrosine 321, glutamine 326, and lysine 329.

Belongs to the lyase 1 family. Argininosuccinate lyase subfamily. Homotetramer. Forms tissue-specific complexes with ASS1, SLC7A1, HSP90AA1 and nitric oxide synthase NOS1, NOS2 or NOS3; the complex maintenance is independent of ASL catalytic function. Post-translationally, acetylation modifies enzyme activity in response to alterations of extracellular nutrient availability. Acetylation increased with trichostin A (TSA) or with nicotinamide (NAM). Glucose increases acetylation by about a factor of 3 with decreasing enzyme activity. Acetylation on Lys-288 is decreased on the addition of extra amino acids resulting in activation of enzyme activity. Expressed in lung and brain (at protein level).

It catalyses the reaction 2-(N(omega)-L-arginino)succinate = fumarate + L-arginine. It functions in the pathway amino-acid biosynthesis; L-arginine biosynthesis; L-arginine from L-ornithine and carbamoyl phosphate: step 3/3. Its pathway is nitrogen metabolism; urea cycle; L-arginine and fumarate from (N(omega)-L-arginino)succinate: step 1/1. Enzyme activity is regulated by acetylation. Functionally, catalyzes the reversible cleavage of L-argininosuccinate to fumarate and L-arginine, an intermediate step reaction in the urea cycle mostly providing for hepatic nitrogen detoxification into excretable urea as well as de novo L-arginine synthesis in nonhepatic tissues. Essential regulator of intracellular and extracellular L-arginine pools. As part of citrulline-nitric oxide cycle, forms tissue-specific multiprotein complexes with argininosuccinate synthase ASS1, transport protein SLC7A1 and nitric oxide synthase NOS1, NOS2 or NOS3, allowing for cell-autonomous L-arginine synthesis while channeling extracellular L-arginine to nitric oxide synthesis pathway. This Mus musculus (Mouse) protein is Argininosuccinate lyase (Asl).